The chain runs to 130 residues: uncharacterized protein (130 aa).

Positions 1 to 26 (MKFIYKLLFILSIVLFLFNNIITING) are cleaved as a signal peptide. The N-linked (GlcNAc...) asparagine glycan is linked to asparagine 88.

The protein resides in the secreted. This is an uncharacterized protein from Dictyostelium discoideum (Social amoeba).